The chain runs to 160 residues: MATQNGSPTDNTAPALNVLVQYIKDFSFENPNAPRSLGAPQGQPDVNIQINVNARPLAPGEFEVELKIEGGAAVQGNTLFAFDLTYGGIFRLMNVPEQSLQPVVLIECPRLLFPFARQIVADAVRGGGFPPLMIDPVDFAALYQQRMMAEAQNLQTAGQA.

It belongs to the SecB family. As to quaternary structure, homotetramer, a dimer of dimers. One homotetramer interacts with 1 SecA dimer.

It is found in the cytoplasm. Functionally, one of the proteins required for the normal export of preproteins out of the cell cytoplasm. It is a molecular chaperone that binds to a subset of precursor proteins, maintaining them in a translocation-competent state. It also specifically binds to its receptor SecA. This Azorhizobium caulinodans (strain ATCC 43989 / DSM 5975 / JCM 20966 / LMG 6465 / NBRC 14845 / NCIMB 13405 / ORS 571) protein is Protein-export protein SecB.